Reading from the N-terminus, the 362-residue chain is tRNA 2-selenouridine synthase (362 aa).

Positions 12-135 (FLNDTPLLDV…LRRFLIDEME (124 aa)) constitute a Rhodanese domain. C95 serves as the catalytic S-selanylcysteine intermediate.

This sequence belongs to the SelU family. Monomer.

It carries out the reaction 5-methylaminomethyl-2-thiouridine(34) in tRNA + selenophosphate + (2E)-geranyl diphosphate + H2O + H(+) = 5-methylaminomethyl-2-selenouridine(34) in tRNA + (2E)-thiogeraniol + phosphate + diphosphate. It catalyses the reaction 5-methylaminomethyl-2-thiouridine(34) in tRNA + (2E)-geranyl diphosphate = 5-methylaminomethyl-S-(2E)-geranyl-thiouridine(34) in tRNA + diphosphate. The catalysed reaction is 5-methylaminomethyl-S-(2E)-geranyl-thiouridine(34) in tRNA + selenophosphate + H(+) = 5-methylaminomethyl-2-(Se-phospho)selenouridine(34) in tRNA + (2E)-thiogeraniol. The enzyme catalyses 5-methylaminomethyl-2-(Se-phospho)selenouridine(34) in tRNA + H2O = 5-methylaminomethyl-2-selenouridine(34) in tRNA + phosphate. Its function is as follows. Involved in the post-transcriptional modification of the uridine at the wobble position (U34) of tRNA(Lys), tRNA(Glu) and tRNA(Gln). Catalyzes the conversion of 2-thiouridine (S2U-RNA) to 2-selenouridine (Se2U-RNA). Acts in a two-step process involving geranylation of 2-thiouridine (S2U) to S-geranyl-2-thiouridine (geS2U) and subsequent selenation of the latter derivative to 2-selenouridine (Se2U) in the tRNA chain. The sequence is that of tRNA 2-selenouridine synthase from Alcanivorax borkumensis (strain ATCC 700651 / DSM 11573 / NCIMB 13689 / SK2).